Consider the following 503-residue polypeptide: Protein ERGIC-53-like (503 aa).

An N-terminal signal peptide occupies residues Met-1–Arg-25. Residues Ser-26–Arg-439 lie on the Lumenal side of the membrane. Residues Arg-32–Leu-253 form the L-type lectin-like domain. The cysteines at positions 177 and 216 are disulfide-linked. Residues Thr-440–Phe-460 traverse the membrane as a helical segment. The Cytoplasmic portion of the chain corresponds to Arg-461–Ala-503.

Predominantly expressed in the sublingual salivary gland, in the mucous cells of the acini, but not in the serous cells, nor in the duct system (at protein level). Not detected in the submandilar, nor the parotid glands. Expressed in the mucous glands, but not detected in the serous glands (at protein level). Besides the salivary glands, expressed in the Brunner's glands in the duodenum, but no other mucous or serous glands (at protein level).

It localises to the endoplasmic reticulum-Golgi intermediate compartment membrane. The sequence is that of Protein ERGIC-53-like (Lman1l) from Rattus norvegicus (Rat).